The chain runs to 142 residues: Acetyltransferase SG1711 (142 aa).

The N-acetyltransferase domain maps to 1–142 (MEIRVFRHDD…GKRLIEDQEY (142 aa)).

The protein belongs to the acetyltransferase family. YpeA subfamily.

In Sodalis glossinidius (strain morsitans), this protein is Acetyltransferase SG1711.